The chain runs to 214 residues: Cytochrome c biogenesis ATP-binding export protein CcmA (214 aa).

The 211-residue stretch at 4-214 (LAVDQLTVSR…FDHGFDGAFL (211 aa)) folds into the ABC transporter domain. 36-43 (GPNGIGKT) is a binding site for ATP.

Belongs to the ABC transporter superfamily. CcmA exporter (TC 3.A.1.107) family. As to quaternary structure, the complex is composed of two ATP-binding proteins (CcmA) and two transmembrane proteins (CcmB).

Its subcellular location is the cell inner membrane. It carries out the reaction heme b(in) + ATP + H2O = heme b(out) + ADP + phosphate + H(+). Part of the ABC transporter complex CcmAB involved in the biogenesis of c-type cytochromes; once thought to export heme, this seems not to be the case, but its exact role is uncertain. Responsible for energy coupling to the transport system. This Rhodobacter capsulatus (strain ATCC BAA-309 / NBRC 16581 / SB1003) protein is Cytochrome c biogenesis ATP-binding export protein CcmA.